The sequence spans 158 residues: C-type lectin mannose-binding isoform (158 aa).

A signal peptide spans 1 to 20 (MGRFLLVTLSMLVVTFSLNE). Intrachain disulfides connect Cys-26/Cys-37, Cys-54/Cys-154, and Cys-129/Cys-146. The region spanning 33–155 (KNGFCYKVFN…CEALYHFICQ (123 aa)) is the C-type lectin domain. Residues 119–121 (EPN) carry the Mannose-binding motif. A glycan (N-linked (GlcNAc...) asparagine) is linked at Asn-121. Ca(2+) contacts are provided by Glu-127, Asn-142, and Asp-143.

This sequence belongs to the true venom lectin family. In terms of assembly, homodimer; disulfide-linked. As to expression, expressed by the venom gland.

It is found in the secreted. In terms of biological role, mannose-binding lectin that binds to and agglutinates erythrocytes in a calcium-dependent manner. This Notechis scutatus scutatus (Mainland tiger snake) protein is C-type lectin mannose-binding isoform.